A 256-amino-acid polypeptide reads, in one-letter code: E3 ubiquitin-protein ligase MIR2 (256 aa).

At 1 to 83 (MASKDVEEGV…NLWPEMERQE (83 aa)) the chain is on the cytoplasmic side. The segment at 7 to 66 (EEGVEGPICWICREEVGNEGIHPCACTGELDVVHPQCLSTWLTVSRNTACQMCRVIYRTR) adopts an RING-CH-type zinc-finger fold. Residues Cys-15, Cys-18, Cys-30, Cys-32, His-40, Cys-43, Cys-56, and Cys-59 each contribute to the Zn(2+) site. Residues 84–104 (IFELFLLMSVVVAGLVGVALC) traverse the membrane as a helical segment. At 105–124 (TWTLLVILTAPAGTFSPGAV) the chain is on the extracellular side. A helical membrane pass occupies residues 125 to 145 (LGFLCFFGFYQIFIVFAFGGI). Over 146-256 (CRVSGTVRAL…VRKNHPKNNG (111 aa)) the chain is Cytoplasmic. The tract at residues 179-256 (DNIELTVLVG…VRKNHPKNNG (78 aa)) is disordered. The span at 193–203 (TDEEPTDESSE) shows a compositional bias: acidic residues. The span at 245–256 (KPVRKNHPKNNG) shows a compositional bias: basic residues.

In terms of assembly, binds human MHC-I, CD86, ICAM1 and CD1D.

The protein localises to the host cell membrane. It is found in the host endoplasmic reticulum. It carries out the reaction S-ubiquitinyl-[E2 ubiquitin-conjugating enzyme]-L-cysteine + [acceptor protein]-L-lysine = [E2 ubiquitin-conjugating enzyme]-L-cysteine + N(6)-ubiquitinyl-[acceptor protein]-L-lysine.. Its pathway is protein modification; protein ubiquitination. Functionally, membrane-bound E3 ubiquitin ligase expressed at the immediate early stage of viral reactivation to mediate polyubiquitination of various host membrane proteins related to the immune response. Promotes ubiquitination and subsequent degradation of host MHC-I, CD86, DC-SIGN and DC-SIGNR, ICAM1 and CD1D molecules, presumably to prevent lysis of infected cells by cytotoxic T-lymphocytes and NK cell. Plays a role in the down-regulation of the host stress-induced NKG2D ligands MICA, MICB and CLEC2B, which enable immune cells expressing the NKG2D receptor to recognize and annihilate infected cells prior to viral spread. Alters monocyte metabolism and proliferation by mediating rapid internalization of cellular growth factor-binding receptor tyrosine kinases from the surface leading to increased signaling. This Homo sapiens (Human) protein is E3 ubiquitin-protein ligase MIR2 (K5).